Consider the following 467-residue polypeptide: MLNKEVIVIGAGLAGCEAAWQIANSGVEVKLVEMRPIHSTPAHHTSEFGELVCSNSFGALSTDRAAGLLQEELRTFNSLIINTADEFSVPAGGALAVDRSKFSKSLTQTLSNHPLVEIKRFEQLDLPDKNRITVIATGPLTSNELANKLKNFTGLDSCHFFDAASPIIYGETINYDIAFRASRYDKGDPAYLNCPMNKIDYLNFRNALIEAEQATLKDFEKESANFFEACLPIEEMARRGVDTMRYGPLKSIGLWNPKWGDLFDRENRLKKRPHAIVQLRKEDLKGKLLNMVGFQTNLKWSEQKRIFRMIPGLEKAEFVRFGVMHRNTFLESPKLLLPTLQFLKRENLFAAGQITGTEGYAAAASGGLLAGLNASLLANNKSPVTFPDESMIGALMNFISNKNEIMSQQKKNKFQPMPASFGLVPELNNKIKDKKLRYKAYQKRSLEVLKEFKKVLDSSFEKDHILV.

10–15 (GAGLAG) provides a ligand contact to FAD.

It belongs to the MnmG family. TrmFO subfamily. Requires FAD as cofactor.

It is found in the cytoplasm. The enzyme catalyses uridine(54) in tRNA + (6R)-5,10-methylene-5,6,7,8-tetrahydrofolate + NADH + H(+) = 5-methyluridine(54) in tRNA + (6S)-5,6,7,8-tetrahydrofolate + NAD(+). It carries out the reaction uridine(54) in tRNA + (6R)-5,10-methylene-5,6,7,8-tetrahydrofolate + NADPH + H(+) = 5-methyluridine(54) in tRNA + (6S)-5,6,7,8-tetrahydrofolate + NADP(+). Catalyzes the folate-dependent formation of 5-methyl-uridine at position 54 (M-5-U54) in all tRNAs. This Prochlorococcus marinus (strain MIT 9515) protein is Methylenetetrahydrofolate--tRNA-(uracil-5-)-methyltransferase TrmFO.